Consider the following 418-residue polypeptide: Actin-related protein 3-A (418 aa).

Belongs to the actin family. ARP3 subfamily. Component of the Arp2/3 complex composed of actr2/arp2, actr3/arp3, arpc1 (arpc1a or arpc1b), arpc2, arpc3, arpc4 and arpc5.

Its subcellular location is the cytoplasm. The protein localises to the cytoskeleton. It localises to the cell projection. It is found in the nucleus. ATP-binding component of the Arp2/3 complex, a multiprotein complex that mediates actin polymerization upon stimulation by nucleation-promoting factor (NPF). The Arp2/3 complex mediates the formation of branched actin networks in the cytoplasm, providing the force for cell motility. Seems to contact the pointed end of the daughter actin filament. In addition to its role in the cytoplasmic cytoskeleton, the Arp2/3 complex also promotes actin polymerization in the nucleus, thereby regulating gene transcription and repair of damaged DNA. The Arp2/3 complex promotes homologous recombination (HR) repair in response to DNA damage by promoting nuclear actin polymerization, leading to drive motility of double-strand breaks (DSBs). This chain is Actin-related protein 3-A, found in Xenopus laevis (African clawed frog).